The primary structure comprises 387 residues: O-methyltransferase asqD (387 aa).

Residue Asp-252 coordinates S-adenosyl-L-methionine. His-294 (proton acceptor) is an active-site residue.

It belongs to the class I-like SAM-binding methyltransferase superfamily. Cation-independent O-methyltransferase family.

It functions in the pathway secondary metabolite biosynthesis. It participates in alkaloid biosynthesis. Its pathway is mycotoxin biosynthesis. Its function is as follows. O-methyltransferase; part of the gene cluster that mediates the biosynthesis of the aspoquinolone mycotoxins. The role of asqD within the aspoquinolone pathway has still to be determined. The first step of the pathway is catalyzed by the nonribosomal peptide synthetase asqK that condenses anthranilic acid and O-methyl-L-tyrosine to produce 4'-methoxycyclopeptin. 4'-methoxycyclopeptin is then converted to 4'-methoxydehydrocyclopeptin by the ketoglutarate-dependent dioxygenase asqJ. AsqJ also converts its first product 4'-methoxydehydrocyclopeptin to 4'-methoxycyclopenin. The following conversion of 4'-methoxycyclopenin into 4'-methoxyviridicatin is catalyzed by the cyclopenase asqI. 4'-methoxyviridicatin is the precursor of quinolone natural products, and is further converted to quinolinone B. The prenyltransferase asqH1 then catalyzes the canonical Friedel-Crafts alkylation of quinolinone B with dimethylallyl cation to yield dimethylallyl quinolone, which is subjected to FAD-dependent dehydrogenation by the FAD-linked oxidoreductase asqF to yield conjugated aryl diene. The delta(3') double bond then serves as the site of the second alkylation with DMAPP catalyzed by the prenyltransferase asqH2 to yield a carbenium ion intermediate, which can be attacked by H(2)O to yield a styrenyl quinolone containing a C3'-hydroxyprenyl chain. The FAD-dependent monooxygenase asqG performs epoxidation of the terminal C7'-C8' olefin. Finally, after dehydratation of the epoxide at C3 by asqC, the quinolone epoxide rearrangement protein asqO catalyzes an enzymatic 3-exo-tet cyclization to yield the cyclopropyl-THF ring system in aspoquinolone. This chain is O-methyltransferase asqD, found in Emericella nidulans (strain FGSC A4 / ATCC 38163 / CBS 112.46 / NRRL 194 / M139) (Aspergillus nidulans).